Consider the following 621-residue polypeptide: MSSVQLSRGDFHSIFTNKQRYDNPTGGVYQVYNTRKSDGANSNRKNLIMISDGIYHMKALLRNQAASKFQSMELQRGDIIRVIIAEPAIVRERKKYVLLVDDFELVQSRADMVNQTSTFLDNYFSEHPNETLKDEDITDSGNVANQTNASNAGVPDMLHSNSNLNANERKFANENPNSQKTRPIFAIEQLSPYQNVWTIKARVSYKGEIKTWHNQRGDGKLFNVNFLDTSGEIRATAFNDFATKFNEILQEGKVYYVSKAKLQPAKPQFTNLTHPYELNLDRDTVIEECFDESNVPKTHFNFIKLDAIQNQEVNSNVDVLGIIQTINPHFELTSRAGKKFDRRDITIVDDSGFSISVGLWNQQALDFNLPEGSVAAIKGVRVTDFGGKSLSMGFSSTLIPNPEIPEAYALKGWYDSKGRNANFITLKQEPGMGGQSAASLTKFIAQRITIARAQAENLGRSEKGDFFSVKAAISFLKVDNFAYPACSNENCNKKVLEQPDGTWRCEKCDTNNARPNWRYILTISIIDETNQLWLTLFDDQAKQLLGVDANTLMSLKEEDPNEFTKITQSIQMNEYDFRIRAREDTYNDQSRIRYTVANLHSLNYRAEADYLADELSKALLA.

Position 2 is an N-acetylserine (Ser-2). Residue Ser-178 is modified to Phosphoserine; by ATM or ATR. A DNA-binding region (OB) is located at residues 197–284 (WTIKARVSYK…PYELNLDRDT (88 aa)). The C4-type zinc-finger motif lies at 486–508 (CSNENCNKKVLEQPDGTWRCEKC).

This sequence belongs to the replication factor A protein 1 family. In terms of assembly, component of the heterotrimeric canonical replication protein A complex (RPA). Interacts with POB3. Post-translationally, the N-terminus is blocked.

Its subcellular location is the nucleus. Functionally, as part of the replication protein A (RPA/RP-A), a single-stranded DNA-binding heterotrimeric complex, may play an essential role in DNA replication, recombination and repair. Binds and stabilizes single-stranded DNA intermediates, preventing complementary DNA reannealing and recruiting different proteins involved in DNA metabolism. Binds to single-stranded sequences participating in DNA replication in addition to those mediating transcriptional repression (URS1) and activation (CAR1). Stimulates the activity of a cognate strand exchange protein (SEP1). It cooperates with T-AG and DNA topoisomerase I to unwind template DNA containing the simian virus 40 origin of DNA replication. In Saccharomyces cerevisiae (strain ATCC 204508 / S288c) (Baker's yeast), this protein is Replication factor A protein 1 (RFA1).